A 368-amino-acid chain; its full sequence is Phosphate acyltransferase (368 aa).

The protein belongs to the PlsX family. As to quaternary structure, homodimer. Probably interacts with PlsY.

It is found in the cytoplasm. It catalyses the reaction a fatty acyl-[ACP] + phosphate = an acyl phosphate + holo-[ACP]. The protein operates within lipid metabolism; phospholipid metabolism. In terms of biological role, catalyzes the reversible formation of acyl-phosphate (acyl-PO(4)) from acyl-[acyl-carrier-protein] (acyl-ACP). This enzyme utilizes acyl-ACP as fatty acyl donor, but not acyl-CoA. The polypeptide is Phosphate acyltransferase (Herpetosiphon aurantiacus (strain ATCC 23779 / DSM 785 / 114-95)).